Reading from the N-terminus, the 758-residue chain is DNA ligase (758 aa).

A disordered region spans residues Met-1–Pro-28. Residues Asp-60–Asp-64, Ser-109–Leu-110, and Glu-148 each bind NAD(+). Residue Lys-150 is the N6-AMP-lysine intermediate of the active site. NAD(+) is bound by residues Arg-171, Glu-208, Lys-324, and Lys-348. The Zn(2+) site is built by Cys-442, Cys-445, Cys-461, and Cys-467. The BRCT domain occupies Ser-660–Asn-749. The disordered stretch occupies residues Leu-735–Asp-758.

It belongs to the NAD-dependent DNA ligase family. LigA subfamily. It depends on Mg(2+) as a cofactor. Mn(2+) is required as a cofactor.

It catalyses the reaction NAD(+) + (deoxyribonucleotide)n-3'-hydroxyl + 5'-phospho-(deoxyribonucleotide)m = (deoxyribonucleotide)n+m + AMP + beta-nicotinamide D-nucleotide.. DNA ligase that catalyzes the formation of phosphodiester linkages between 5'-phosphoryl and 3'-hydroxyl groups in double-stranded DNA using NAD as a coenzyme and as the energy source for the reaction. It is essential for DNA replication and repair of damaged DNA. The sequence is that of DNA ligase from Renibacterium salmoninarum (strain ATCC 33209 / DSM 20767 / JCM 11484 / NBRC 15589 / NCIMB 2235).